We begin with the raw amino-acid sequence, 228 residues long: Phosphoribosylformylglycinamidine synthase subunit PurQ (228 aa).

The region spanning 3 to 225 (FAVLVFPGSN…LTTLKSGVVT (223 aa)) is the Glutamine amidotransferase type-1 domain. Cys86 acts as the Nucleophile in catalysis. Residues His194 and Glu196 contribute to the active site.

As to quaternary structure, part of the FGAM synthase complex composed of 1 PurL, 1 PurQ and 2 PurS subunits.

It localises to the cytoplasm. It catalyses the reaction N(2)-formyl-N(1)-(5-phospho-beta-D-ribosyl)glycinamide + L-glutamine + ATP + H2O = 2-formamido-N(1)-(5-O-phospho-beta-D-ribosyl)acetamidine + L-glutamate + ADP + phosphate + H(+). The enzyme catalyses L-glutamine + H2O = L-glutamate + NH4(+). It functions in the pathway purine metabolism; IMP biosynthesis via de novo pathway; 5-amino-1-(5-phospho-D-ribosyl)imidazole from N(2)-formyl-N(1)-(5-phospho-D-ribosyl)glycinamide: step 1/2. In terms of biological role, part of the phosphoribosylformylglycinamidine synthase complex involved in the purines biosynthetic pathway. Catalyzes the ATP-dependent conversion of formylglycinamide ribonucleotide (FGAR) and glutamine to yield formylglycinamidine ribonucleotide (FGAM) and glutamate. The FGAM synthase complex is composed of three subunits. PurQ produces an ammonia molecule by converting glutamine to glutamate. PurL transfers the ammonia molecule to FGAR to form FGAM in an ATP-dependent manner. PurS interacts with PurQ and PurL and is thought to assist in the transfer of the ammonia molecule from PurQ to PurL. This is Phosphoribosylformylglycinamidine synthase subunit PurQ from Latilactobacillus sakei subsp. sakei (strain 23K) (Lactobacillus sakei subsp. sakei).